The chain runs to 185 residues: Alcohol dehydrogenase 1 (185 aa).

NAD(+)-binding positions include 10–15, D34, K39, 103–105, and R180; these read GLGGVG and VGV.

Belongs to the zinc-containing alcohol dehydrogenase family. Class-I subfamily. As to quaternary structure, homodimer. The cofactor is Zn(2+).

Its subcellular location is the cytoplasm. The catalysed reaction is a primary alcohol + NAD(+) = an aldehyde + NADH + H(+). It catalyses the reaction a secondary alcohol + NAD(+) = a ketone + NADH + H(+). This chain is Alcohol dehydrogenase 1 (ADH1), found in Anas platyrhynchos (Mallard).